Here is a 588-residue protein sequence, read N- to C-terminus: Solute carrier family 2, facilitated glucose transporter member 12 (588 aa).

The Cytoplasmic segment spans residues 1 to 28 (MLAHSTAQDLILQQRSSDDHPQTNPRQT). Residues 29 to 49 (GCGAFIILSSVIAAISGLLVG) traverse the membrane as a helical segment. The Extracellular segment spans residues 50–74 (YELGIISGALLQLQSLLELTCQQQE). A helical membrane pass occupies residues 75–95 (IVVSALLIGALVASLVGGCLI). At 96-103 (DLYGRRTT) the chain is on the cytoplasmic side. Residues 104 to 124 (IIFTSILLVFANLLPVVVVSY) form a helical membrane-spanning segment. At 125 to 131 (GSLIAGR) the chain is on the extracellular side. Residues 132 to 152 (IFIGVSISLSAIATCVYIAEL) form a helical membrane-spanning segment. The Cytoplasmic segment spans residues 153 to 158 (SPQDKR). A helical membrane pass occupies residues 159–179 (GMLVSLNELMIVAGILLAYIC). The Extracellular segment spans residues 180 to 191 (NYLFASVNNGWK). A helical membrane pass occupies residues 192–212 (YMFGLITPLAALQAVAMFFLP). Over 213-272 (RSPRFLIMKGYDDAAGKVLQKLRATTDINEELTAIKSSIKAEYQYKFLDLFCSRDNMRAR) the chain is Cytoplasmic. Residues 273–293 (LLIGLTLSFFVQITGQPNILF) traverse the membrane as a helical segment. The Extracellular portion of the chain corresponds to 294–311 (YASTVLKSVGFQSTEAAS). The chain crosses the membrane as a helical span at residues 312 to 332 (LASTGIGVVKVVSTIPAIFLV). Over 333 to 339 (DKIGSKT) the chain is Cytoplasmic. The chain crosses the membrane as a helical span at residues 340–360 (FLCIGSAVMAVSLVSVGLVSL). Residues 361–459 (QLDVNYNNIC…IPEYMKWLCL (99 aa)) lie on the Extracellular side of the membrane. N-linked (GlcNAc...) asparagine glycosylation is found at Asn377, Asn395, and Asn419. Residues 460–480 (SSLLAFVAAFSIGLGPMAWLV) traverse the membrane as a helical segment. Over 481-492 (QSEIFPAGIKGR) the chain is Cytoplasmic. Residues 493–513 (AFAITSSMNWGMNLLISLTFL) traverse the membrane as a helical segment. Residues 514–522 (TLTEMIGLP) lie on the Extracellular side of the membrane. The chain crosses the membrane as a helical span at residues 523–543 (WMLFGYALMSIASLVFVIMFV). Topologically, residues 544-588 (PNTKGRPLEEISKELANRSYMCNAVCHRRRSKKKLTPVALIQSPA) are cytoplasmic.

The protein belongs to the major facilitator superfamily. Sugar transporter (TC 2.A.1.1) family. Glucose transporter subfamily.

The protein resides in the cell membrane. The protein localises to the endomembrane system. It is found in the cytoplasm. Its subcellular location is the perinuclear region. The enzyme catalyses D-glucose(out) = D-glucose(in). In terms of biological role, insulin-regulated facilitative glucose transporter. In Xenopus laevis (African clawed frog), this protein is Solute carrier family 2, facilitated glucose transporter member 12.